Consider the following 573-residue polypeptide: Membrane protein insertase YidC (573 aa).

The helical transmembrane segment at 6 to 26 (VFLIFAWLMVAALLWMEWGKD) threads the bilayer. The disordered stretch occupies residues 63 to 82 (PQAGSPAAVPATSTTTATPA). Helical transmembrane passes span 355 to 375 (FSIM…LHSF), 379 to 399 (WGWA…PLSA), 446 to 466 (GGCL…WVLV), 488 to 508 (PYFI…KLTP), and 524 to 544 (PLVF…YWVV).

This sequence belongs to the OXA1/ALB3/YidC family. Type 1 subfamily. Interacts with the Sec translocase complex via SecD. Specifically interacts with transmembrane segments of nascent integral membrane proteins during membrane integration.

It is found in the cell inner membrane. In terms of biological role, required for the insertion and/or proper folding and/or complex formation of integral membrane proteins into the membrane. Involved in integration of membrane proteins that insert both dependently and independently of the Sec translocase complex, as well as at least some lipoproteins. Aids folding of multispanning membrane proteins. In Xanthomonas campestris pv. campestris (strain 8004), this protein is Membrane protein insertase YidC.